The sequence spans 401 residues: Subtilisin-like protease 10 (401 aa).

The N-terminal stretch at 1–19 is a signal peptide; that stretch reads MLFLKAVIAILSVLPAADA. Positions 20–116 are excised as a propeptide; the sequence is AAILNFENKQ…IEPDRMASAQ (97 aa). Residues 35–112 enclose the Inhibitor I9 domain; the sequence is SYIVVLKNDI…QVDYIEPDRM (78 aa). Residues 126 to 401 form the Peptidase S8 domain; the sequence is SWGLGRISHQ…NRLLYNGSGQ (276 aa). Catalysis depends on charge relay system residues D158 and H189. N250 is a glycosylation site (N-linked (GlcNAc...) asparagine). S347 serves as the catalytic Charge relay system. N397 carries N-linked (GlcNAc...) asparagine glycosylation.

The protein belongs to the peptidase S8 family.

It is found in the secreted. Its function is as follows. Secreted subtilisin-like serine protease with keratinolytic activity that contributes to pathogenicity. The protein is Subtilisin-like protease 10 (SUB10) of Arthroderma otae (strain ATCC MYA-4605 / CBS 113480) (Microsporum canis).